Consider the following 132-residue polypeptide: Small ribosomal subunit protein uS8 (132 aa).

Belongs to the universal ribosomal protein uS8 family. As to quaternary structure, part of the 30S ribosomal subunit. Contacts proteins S5 and S12.

One of the primary rRNA binding proteins, it binds directly to 16S rRNA central domain where it helps coordinate assembly of the platform of the 30S subunit. This chain is Small ribosomal subunit protein uS8, found in Xylella fastidiosa (strain 9a5c).